Here is a 317-residue protein sequence, read N- to C-terminus: Putative 2-hydroxyacid dehydrogenase SE_1879 (317 aa).

Residues 155–156 (EI), 234–236 (AGR), and D260 contribute to the NAD(+) site. R236 is a catalytic residue. E265 is a catalytic residue. H283 serves as the catalytic Proton donor. 283-286 (HIGN) contributes to the NAD(+) binding site.

Belongs to the D-isomer specific 2-hydroxyacid dehydrogenase family.

This Staphylococcus epidermidis (strain ATCC 12228 / FDA PCI 1200) protein is Putative 2-hydroxyacid dehydrogenase SE_1879.